The following is a 569-amino-acid chain: Potassium-transporting ATPase potassium-binding subunit (569 aa).

10 helical membrane-spanning segments follow: residues 11–31 (LLLA…ACVF), 64–84 (LAYT…LYGI), 135–155 (AGLA…ALAV), 179–199 (LYLL…MGIP), 258–278 (FNIL…GKMV), 285–305 (WALI…VYIA), 384–404 (GLYG…LMVG), 423–443 (MLAV…AAVL), 490–510 (LGIS…AIAG), and 531–551 (LFVG…YFPA).

The protein belongs to the KdpA family. In terms of assembly, the system is composed of three essential subunits: KdpA, KdpB and KdpC.

It is found in the cell inner membrane. Its function is as follows. Part of the high-affinity ATP-driven potassium transport (or Kdp) system, which catalyzes the hydrolysis of ATP coupled with the electrogenic transport of potassium into the cytoplasm. This subunit binds the periplasmic potassium ions and delivers the ions to the membrane domain of KdpB through an intramembrane tunnel. This is Potassium-transporting ATPase potassium-binding subunit from Allorhizobium ampelinum (strain ATCC BAA-846 / DSM 112012 / S4) (Agrobacterium vitis (strain S4)).